A 379-amino-acid chain; its full sequence is 1-deoxy-D-xylulose 5-phosphate reductoisomerase (379 aa).

NADPH is bound by residues Thr10, Gly11, Ser12, Ile13, Arg38, Asn39, and Asn121. Position 122 (Lys122) interacts with 1-deoxy-D-xylulose 5-phosphate. Glu123 contacts NADPH. Residue Asp147 coordinates Mn(2+). 1-deoxy-D-xylulose 5-phosphate contacts are provided by Ser148, Glu149, Ser173, and His196. Glu149 is a binding site for Mn(2+). Residue Gly202 participates in NADPH binding. Residues Ser209, Asn214, Lys215, and Glu218 each coordinate 1-deoxy-D-xylulose 5-phosphate. Glu218 is a Mn(2+) binding site.

Belongs to the DXR family. Mg(2+) is required as a cofactor. The cofactor is Mn(2+).

It catalyses the reaction 2-C-methyl-D-erythritol 4-phosphate + NADP(+) = 1-deoxy-D-xylulose 5-phosphate + NADPH + H(+). It functions in the pathway isoprenoid biosynthesis; isopentenyl diphosphate biosynthesis via DXP pathway; isopentenyl diphosphate from 1-deoxy-D-xylulose 5-phosphate: step 1/6. Functionally, catalyzes the NADPH-dependent rearrangement and reduction of 1-deoxy-D-xylulose-5-phosphate (DXP) to 2-C-methyl-D-erythritol 4-phosphate (MEP). In Chlamydia trachomatis serovar A (strain ATCC VR-571B / DSM 19440 / HAR-13), this protein is 1-deoxy-D-xylulose 5-phosphate reductoisomerase.